A 268-amino-acid chain; its full sequence is Activator of basal transcription 1 (268 aa).

Residues 6-38 (KLVEEQKAAMEEEKEVNAEAAEELEEAEEASCN) adopt a coiled-coil conformation. One can recognise an RRM domain in the interval 47–144 (GIVYLGHVPP…RKRSPFRYDL (98 aa)). A coiled-coil region spans residues 163-193 (AFERQVRRQRLRAEVAQAKRETDFYLRNVEQ). The interval 200 to 242 (ADGDATRPNSSWTFTQRPTEQELRAQKGARPGGRERARLATVQ) is disordered. The span at 206-217 (RPNSSWTFTQRP) shows a compositional bias: polar residues.

It belongs to the ESF2/ABP1 family. Interacts with IGHMBP2. Interacts with ESF1/ABTAP.

The protein resides in the nucleus. It is found in the nucleolus. Its function is as follows. May be a novel TATA-binding protein (TBP) which can function as a basal transcription activator. Can act as a regulator of basal transcription for class II genes. The sequence is that of Activator of basal transcription 1 (Abt1) from Rattus norvegicus (Rat).